A 967-amino-acid polypeptide reads, in one-letter code: Kinesin-like protein KIF28P (967 aa).

One can recognise a Kinesin motor domain in the interval 7–355 (DSVKAVRVRP…LRYAERERKI (349 aa)). Residue 111–118 (GQTGSGKS) coordinates ATP. The region spanning 410–472 (APCPRPALSP…LQHLDRLILG (63 aa)) is the FHA domain. Residues 822 to 851 (NQIPELYLKLLKLEQETEPLRNINRALREE) adopt a coiled-coil conformation.

This sequence belongs to the TRAFAC class myosin-kinesin ATPase superfamily. Kinesin family.

It is found in the mitochondrion membrane. Functionally, microtubule-dependent motor protein required for mitochondrion morphology and transport of mitochondria in neuronal cells. The sequence is that of Kinesin-like protein KIF28P (KIF28P) from Homo sapiens (Human).